A 2108-amino-acid polypeptide reads, in one-letter code: General negative regulator of transcription subunit 1 (2108 aa).

2 coiled-coil regions span residues 795–813 (NVTLANLNNKVDELKKSLT) and 1021–1046 (MQQHQQQMLIYQQRQQQQQQRQQQQQ). The segment at 1323–1352 (QQQQLQKSRLNQPSQSAQPPGVNVPNPQGG) is disordered. A compositionally biased stretch (polar residues) spans 1329 to 1339 (KSRLNQPSQSA). Positions 1340 to 1352 (QPPGVNVPNPQGG) are enriched in low complexity. Phosphothreonine is present on Thr-2102.

It belongs to the CNOT1 family. As to quaternary structure, forms a NOT protein complex that comprises NOT1, NOT2, NOT3, NOT4 and NOT5. Subunit of the 1.0 MDa CCR4-NOT core complex that contains CCR4, CAF1, NOT1, NOT2, NOT3, NOT4, NOT5, CAF40 and CAF130. In the complex interacts with CCR4, POP2, NOT2, NOT4 and NOT5. The core complex probably is part of a less characterized 1.9 MDa CCR4-NOT complex.

It is found in the cytoplasm. The protein resides in the nucleus. In terms of biological role, acts as a component of the CCR4-NOT core complex, which in the nucleus seems to be a general transcription factor, and in the cytoplasm the major mRNA deadenylase involved in mRNA turnover. The NOT protein subcomplex negatively regulates the basal and activated transcription of many genes. Preferentially affects TC-type TATA element-dependent transcription. Could directly or indirectly inhibit component(s) of the general transcription machinery. This is General negative regulator of transcription subunit 1 (CDC39) from Saccharomyces cerevisiae (strain ATCC 204508 / S288c) (Baker's yeast).